A 487-amino-acid chain; its full sequence is 7-deoxyloganetin glucosyltransferase (487 aa).

H25 (proton acceptor) is an active-site residue. Position 25 (H25) interacts with an anthocyanidin. D129 serves as the catalytic Charge relay. 7 residues coordinate UDP-alpha-D-glucose: T151, Q366, H381, W384, N385, S386, and E389. A404 provides a ligand contact to an anthocyanidin. Positions 405 and 406 each coordinate UDP-alpha-D-glucose.

The protein belongs to the UDP-glycosyltransferase family. Expressed in roots.

The catalysed reaction is 7-deoxyloganetin + UDP-alpha-D-glucose = 7-deoxyloganin + UDP + H(+). In terms of biological role, iridoid glucosyltransferase acting exclusively on 7-deoxyloganetin. No activity with 7-deoxyloganetic acid. The protein is 7-deoxyloganetin glucosyltransferase (UGT85A23) of Catharanthus roseus (Madagascar periwinkle).